The sequence spans 760 residues: Xaa-Pro dipeptidyl-peptidase (760 aa).

Active-site charge relay system residues include Ser-349, Asp-469, and His-499.

This sequence belongs to the peptidase S15 family. Homodimer.

Its subcellular location is the cytoplasm. It catalyses the reaction Hydrolyzes Xaa-Pro-|- bonds to release unblocked, N-terminal dipeptides from substrates including Ala-Pro-|-p-nitroanilide and (sequentially) Tyr-Pro-|-Phe-Pro-|-Gly-Pro-|-Ile.. Its function is as follows. Removes N-terminal dipeptides sequentially from polypeptides having unsubstituted N-termini provided that the penultimate residue is proline. The protein is Xaa-Pro dipeptidyl-peptidase of Streptococcus pyogenes serotype M28 (strain MGAS6180).